Here is a 316-residue protein sequence, read N- to C-terminus: Ribosomal RNA small subunit methyltransferase H (316 aa).

S-adenosyl-L-methionine-binding positions include 35–37 (AGH), Asp55, Phe84, Asp105, and Gln112.

Belongs to the methyltransferase superfamily. RsmH family.

The protein localises to the cytoplasm. The enzyme catalyses cytidine(1402) in 16S rRNA + S-adenosyl-L-methionine = N(4)-methylcytidine(1402) in 16S rRNA + S-adenosyl-L-homocysteine + H(+). Functionally, specifically methylates the N4 position of cytidine in position 1402 (C1402) of 16S rRNA. This Streptococcus uberis (strain ATCC BAA-854 / 0140J) protein is Ribosomal RNA small subunit methyltransferase H.